Consider the following 1269-residue polypeptide: Protein cramped-like (1269 aa).

The span at 1 to 12 (MTVKLGDGGSGE) shows a compositional bias: gly residues. Residues 1 to 165 (MTVKLGDGGS…GKKVRRQWES (165 aa)) form a disordered region. Basic and acidic residues-rich tracts occupy residues 13–24 (DGLKKLGKRAAD) and 43–52 (SGTKRDEKTP). Over residues 59-74 (PPAPPGAPQAPSPPQG) the composition is skewed to pro residues. A compositionally biased stretch (gly residues) spans 105 to 123 (GNAGGSGPRGKGAEGGGSS). Low complexity predominate over residues 124 to 147 (SGNVSGVAPAAPAGGSRSSSRNLG). Residues 151–165 (GEKEEGKKVRRQWES) are compositionally biased toward basic and acidic residues. The 64-residue stretch at 161–224 (RQWESWSTED…FYYRTWHKIT (64 aa)) folds into the SANT domain. Position 307 is a phosphoserine (Ser-307). Disordered stretches follow at residues 450–541 (IQSG…PGAL), 581–666 (DTRP…EVPA), 757–827 (VRPA…NDSD), 976–1034 (EGLS…DSFQ), 1055–1092 (IPLSSSESSSTRLSPPDVSALLDISLPGPPEDALSQGE), and 1115–1157 (VPLS…PSDS). Over residues 485–507 (SSGESSPESAPGEGAALSLSSPD) the composition is skewed to low complexity. 2 stretches are compositionally biased toward basic and acidic residues: residues 508-518 (APDRPPPRHQD) and 526-535 (TPAEGRDSPT). Composition is skewed to polar residues over residues 757-767 (VRPAQEEQSMT), 774-806 (TVSSRSPRCPRNQASLRSSKTFPPSSAPCSSGL), and 982-1002 (SPLSSDEVTGAISGQDSTGTH). Low complexity-rich tracts occupy residues 1055–1070 (IPLSSSESSSTRLSPP) and 1125–1140 (SDSSKSLPSPSSSPQP). The residue at position 1268 (Ser-1268) is a Phosphoserine.

The protein belongs to the cramped family.

Its subcellular location is the nucleus. This is Protein cramped-like from Homo sapiens (Human).